The sequence spans 444 residues: Docking protein 3 (444 aa).

The PH domain maps to 7–123; the sequence is PVKDGILYQQ…WVDPICQLAF (117 aa). The residue at position 138 (Ser-138) is a Phosphoserine. Residues 157–261 enclose the IRS-type PTB domain; that stretch reads EVTEFPVIVQ…ARQRERLPEL (105 aa). Ser-274 bears the Phosphoserine mark. Residues 278–299 form a disordered region; sequence LEPPGELREVAPGFELPTPRKL. Ser-308 and Ser-314 each carry phosphoserine. Tyr-325 carries the phosphotyrosine modification. A disordered region spans residues 354–390; sequence GLTNGGPEAQEGPPGGRSPLGSPIYHNTEDLSWPGSA. Low complexity predominate over residues 358–376; sequence GGPEAQEGPPGGRSPLGSP. Residue Ser-371 is modified to Phosphoserine.

The protein belongs to the DOK family. Type A subfamily. In terms of assembly, on tyrosine phosphorylation, interacts with CSK and INPP5D/SHIP1 via their SH2 domains. Both Tyr-325 and Tyr-343 are required for interaction with INPP5D. Only Tyr-325 is required for interaction with CSK. Binds ABL1 through the PTB domain and in a kinase-dependent manner. Does not interact with RasGAP. In terms of processing, constitutively tyrosine-phosphorylated. On IL2 stimulation, phosphorylated on C-terminal tyrosine residues possibly by Src kinases. Can also be phosphorylated by ABL1 kinase. As to expression, predominantly expressed in bone marrow, spleen and lung. Low levels in heart, brain, liver, muscle, thymus, kidney and testis. Highly expressed in B-cells and macrophages.

It localises to the cytoplasm. The protein localises to the cell membrane. Functionally, DOK proteins are enzymatically inert adaptor or scaffolding proteins. They provide a docking platform for the assembly of multimolecular signaling complexes. DOK3 is a negative regulator of JNK signaling in B-cells through interaction with INPP5D/SHIP1. May modulate ABL1 function. The polypeptide is Docking protein 3 (Dok3) (Mus musculus (Mouse)).